A 257-amino-acid polypeptide reads, in one-letter code: MARDSEDQDMETETNGAAEGLDPTSAVTGLPQKRFYRQRAHSNPIADHSFDYPARPEDVNWRALYPSIQPDQKVTFADIGCGYGGFLVTLGEMFPEKFSIGMEIRVKVSDYVMDRITALRHKSGEAGAYKNIACLRTNAMKYLPNYFAKGQLEKMFFLYPDPHFKRAKHKWRIINQALLSEYAYVLKKGGLVYTMTDVEDLHQWIVQHMEEHPLYERLKEEEEQSDPITPKLYQSSEEGAKVVRNKGDHFLAIFRRL.

The span at 1-12 shows a compositional bias: acidic residues; the sequence is MARDSEDQDMET. A disordered region spans residues 1–25; that stretch reads MARDSEDQDMETETNGAAEGLDPTS. Residues glycine 80, 103 to 104, 138 to 139, and leucine 158 contribute to the S-adenosyl-L-methionine site; these read EI and NA. Residue aspartate 161 is part of the active site. 236 to 238 contributes to the S-adenosyl-L-methionine binding site; it reads SEE.

It belongs to the class I-like SAM-binding methyltransferase superfamily. TrmB family.

It is found in the nucleus. The enzyme catalyses guanosine(46) in tRNA + S-adenosyl-L-methionine = N(7)-methylguanosine(46) in tRNA + S-adenosyl-L-homocysteine. Its pathway is tRNA modification; N(7)-methylguanine-tRNA biosynthesis. Its function is as follows. Catalyzes the formation of N(7)-methylguanine at position 46 (m7G46) in tRNA. The protein is tRNA (guanine-N(7)-)-methyltransferase of Drosophila ananassae (Fruit fly).